The sequence spans 512 residues: Glutamate--tRNA ligase (512 aa).

The 'HIGH' region motif lies at proline 11–glycine 21. The short motif at lysine 263–arginine 267 is the 'KMSKS' region element. Residue lysine 266 coordinates ATP.

The protein belongs to the class-I aminoacyl-tRNA synthetase family. Glutamate--tRNA ligase type 1 subfamily. Monomer.

Its subcellular location is the cytoplasm. It carries out the reaction tRNA(Glu) + L-glutamate + ATP = L-glutamyl-tRNA(Glu) + AMP + diphosphate. Its function is as follows. Catalyzes the attachment of glutamate to tRNA(Glu) in a two-step reaction: glutamate is first activated by ATP to form Glu-AMP and then transferred to the acceptor end of tRNA(Glu). In Amoebophilus asiaticus (strain 5a2), this protein is Glutamate--tRNA ligase.